The primary structure comprises 115 residues: Large ribosomal subunit protein bL19 (115 aa).

The protein belongs to the bacterial ribosomal protein bL19 family.

In terms of biological role, this protein is located at the 30S-50S ribosomal subunit interface and may play a role in the structure and function of the aminoacyl-tRNA binding site. This Salmonella choleraesuis (strain SC-B67) protein is Large ribosomal subunit protein bL19.